Consider the following 736-residue polypeptide: Phosphoribosylformylglycinamidine synthase subunit PurL (736 aa).

The active site involves His-48. 2 residues coordinate ATP: Tyr-51 and Lys-90. Glu-92 serves as a coordination point for Mg(2+). Residues 93 to 96 (SHNH) and Arg-115 contribute to the substrate site. The active-site Proton acceptor is His-94. Asp-116 serves as a coordination point for Mg(2+). Position 239 (Gln-239) interacts with substrate. Residue Asp-267 coordinates Mg(2+). 311–313 (ESQ) is a binding site for substrate. Positions 492 and 529 each coordinate ATP. Asn-530 contacts Mg(2+). Substrate is bound at residue Ser-532.

Belongs to the FGAMS family. In terms of assembly, monomer. Part of the FGAM synthase complex composed of 1 PurL, 1 PurQ and 2 PurS subunits.

The protein localises to the cytoplasm. The catalysed reaction is N(2)-formyl-N(1)-(5-phospho-beta-D-ribosyl)glycinamide + L-glutamine + ATP + H2O = 2-formamido-N(1)-(5-O-phospho-beta-D-ribosyl)acetamidine + L-glutamate + ADP + phosphate + H(+). The protein operates within purine metabolism; IMP biosynthesis via de novo pathway; 5-amino-1-(5-phospho-D-ribosyl)imidazole from N(2)-formyl-N(1)-(5-phospho-D-ribosyl)glycinamide: step 1/2. Part of the phosphoribosylformylglycinamidine synthase complex involved in the purines biosynthetic pathway. Catalyzes the ATP-dependent conversion of formylglycinamide ribonucleotide (FGAR) and glutamine to yield formylglycinamidine ribonucleotide (FGAM) and glutamate. The FGAM synthase complex is composed of three subunits. PurQ produces an ammonia molecule by converting glutamine to glutamate. PurL transfers the ammonia molecule to FGAR to form FGAM in an ATP-dependent manner. PurS interacts with PurQ and PurL and is thought to assist in the transfer of the ammonia molecule from PurQ to PurL. The polypeptide is Phosphoribosylformylglycinamidine synthase subunit PurL (Bradyrhizobium diazoefficiens (strain JCM 10833 / BCRC 13528 / IAM 13628 / NBRC 14792 / USDA 110)).